The sequence spans 106 residues: Cell cycle protein GpsB (106 aa).

Positions 34-67 form a coiled coil; it reads LDVIIQDYDNFKQEIDRLKAENEKLKKSTPAVEQ. The interval 55–83 is disordered; it reads NEKLKKSTPAVEQSRSRSQQPPTSQVNYD. Residues 70–79 are compositionally biased toward low complexity; it reads SRSQQPPTSQ.

Belongs to the GpsB family. Forms polymers through the coiled coil domains. Interacts with PBP1, MreC and EzrA.

The protein localises to the cytoplasm. Divisome component that associates with the complex late in its assembly, after the Z-ring is formed, and is dependent on DivIC and PBP2B for its recruitment to the divisome. Together with EzrA, is a key component of the system that regulates PBP1 localization during cell cycle progression. Its main role could be the removal of PBP1 from the cell pole after pole maturation is completed. Also contributes to the recruitment of PBP1 to the division complex. Not essential for septum formation. The sequence is that of Cell cycle protein GpsB from Oceanobacillus iheyensis (strain DSM 14371 / CIP 107618 / JCM 11309 / KCTC 3954 / HTE831).